A 221-amino-acid polypeptide reads, in one-letter code: Probable septum site-determining protein MinC (221 aa).

This sequence belongs to the MinC family. In terms of assembly, interacts with MinD and FtsZ.

Its function is as follows. Cell division inhibitor that blocks the formation of polar Z ring septums. Rapidly oscillates between the poles of the cell to destabilize FtsZ filaments that have formed before they mature into polar Z rings. Prevents FtsZ polymerization. The sequence is that of Probable septum site-determining protein MinC from Shewanella baltica (strain OS223).